The sequence spans 612 residues: UvrABC system protein C (612 aa).

Positions 20–98 constitute a GIY-YIG domain; sequence THSGVYRMLD…IKQHRPKYNI (79 aa). The region spanning 208-243 is the UVR domain; that stretch reads SSVLEEISAKMYQASEDMEYEKAQVYRDQLVVLRKL.

The protein belongs to the UvrC family. In terms of assembly, interacts with UvrB in an incision complex.

It localises to the cytoplasm. Functionally, the UvrABC repair system catalyzes the recognition and processing of DNA lesions. UvrC both incises the 5' and 3' sides of the lesion. The N-terminal half is responsible for the 3' incision and the C-terminal half is responsible for the 5' incision. This Francisella tularensis subsp. holarctica (strain FTNF002-00 / FTA) protein is UvrABC system protein C.